The sequence spans 342 residues: Anthranilate phosphoribosyltransferase (342 aa).

Residues glycine 81, 84–85, threonine 89, 91–94, 109–117, and alanine 121 each bind 5-phospho-alpha-D-ribose 1-diphosphate; these read GD, NVST, and KHGNRAASS. Anthranilate is bound at residue glycine 81. Serine 93 contacts Mg(2+). Position 112 (asparagine 112) interacts with anthranilate. Arginine 167 is a binding site for anthranilate. Aspartate 226 and glutamate 227 together coordinate Mg(2+).

The protein belongs to the anthranilate phosphoribosyltransferase family. In terms of assembly, homodimer. It depends on Mg(2+) as a cofactor.

The enzyme catalyses N-(5-phospho-beta-D-ribosyl)anthranilate + diphosphate = 5-phospho-alpha-D-ribose 1-diphosphate + anthranilate. Its pathway is amino-acid biosynthesis; L-tryptophan biosynthesis; L-tryptophan from chorismate: step 2/5. Functionally, catalyzes the transfer of the phosphoribosyl group of 5-phosphorylribose-1-pyrophosphate (PRPP) to anthranilate to yield N-(5'-phosphoribosyl)-anthranilate (PRA). This is Anthranilate phosphoribosyltransferase from Beijerinckia indica subsp. indica (strain ATCC 9039 / DSM 1715 / NCIMB 8712).